The following is an 878-amino-acid chain: Leucine--tRNA ligase (878 aa).

The 'HIGH' region signature appears at 43–53; sequence PYPSGRIHIGH. The 'KMSKS' region motif lies at 630-634; sequence KMSKS. An ATP-binding site is contributed by Lys633.

Belongs to the class-I aminoacyl-tRNA synthetase family.

It is found in the cytoplasm. It carries out the reaction tRNA(Leu) + L-leucine + ATP = L-leucyl-tRNA(Leu) + AMP + diphosphate. The polypeptide is Leucine--tRNA ligase (Nitrobacter hamburgensis (strain DSM 10229 / NCIMB 13809 / X14)).